The primary structure comprises 276 residues: Cholesterol 25-hydroxylase-like protein 1, member 2 (276 aa).

Residue asparagine 30 is glycosylated (N-linked (GlcNAc...) asparagine). Transmembrane regions (helical) follow at residues 39–59 (LFPV…YLSC), 90–110 (GVTL…QWMW), and 126–146 (LVGG…IWHF). Residues 134 to 265 (LLLFDLQYFI…FSHWDKMFGT (132 aa)) form the Fatty acid hydroxylase domain. Positions 144–148 (WHFLH) match the Histidine box-1 motif. The Histidine box-2 motif lies at 159 to 163 (HAIHH). N-linked (GlcNAc...) asparagine glycosylation occurs at asparagine 164. The next 2 helical transmembrane spans lie at 175–195 (CLGG…PVLL) and 199–219 (LLTT…DHCG). The short motif at 240-246 (KHDVHHQ) is the Histidine box-3 element.

This sequence belongs to the sterol desaturase family. It depends on Fe cation as a cofactor.

The protein resides in the endoplasmic reticulum membrane. Functionally, may catalyze the formation of 25-hydroxycholesterol from cholesterol. This chain is Cholesterol 25-hydroxylase-like protein 1, member 2, found in Danio rerio (Zebrafish).